Here is a 129-residue protein sequence, read N- to C-terminus: MAKEATRVRRRERKNISSGVAHVNSTFNNTMITITDAQGNAIAWSSAGAKGFKGSRKSTPFAAQIAAEDCAKKAQEHGMKSLEVEVCGPGSGRESALRALQAAGFMITSIRDVTPIPHNGCRPRKKRRV.

The protein belongs to the universal ribosomal protein uS11 family. As to quaternary structure, part of the 30S ribosomal subunit. Interacts with proteins S7 and S18. Binds to IF-3.

Located on the platform of the 30S subunit, it bridges several disparate RNA helices of the 16S rRNA. Forms part of the Shine-Dalgarno cleft in the 70S ribosome. The polypeptide is Small ribosomal subunit protein uS11 (Allorhizobium ampelinum (strain ATCC BAA-846 / DSM 112012 / S4) (Agrobacterium vitis (strain S4))).